A 306-amino-acid polypeptide reads, in one-letter code: Mycothiol acetyltransferase (306 aa).

N-acetyltransferase domains follow at residues 17–163 (VARV…RPMP) and 166–306 (LALS…YRRA). Residue E48 participates in 1D-myo-inositol 2-(L-cysteinylamino)-2-deoxy-alpha-D-glucopyranoside binding. 89 to 91 (IVV) is a binding site for acetyl-CoA. 1D-myo-inositol 2-(L-cysteinylamino)-2-deoxy-alpha-D-glucopyranoside is bound by residues E192, K232, and E239. Acetyl-CoA is bound by residues 243-245 (LGV) and 250-256 (AARGLGS). Position 277 (Y277) interacts with 1D-myo-inositol 2-(L-cysteinylamino)-2-deoxy-alpha-D-glucopyranoside.

Belongs to the acetyltransferase family. MshD subfamily. As to quaternary structure, monomer.

The enzyme catalyses 1D-myo-inositol 2-(L-cysteinylamino)-2-deoxy-alpha-D-glucopyranoside + acetyl-CoA = mycothiol + CoA + H(+). Functionally, catalyzes the transfer of acetyl from acetyl-CoA to desacetylmycothiol (Cys-GlcN-Ins) to form mycothiol. The protein is Mycothiol acetyltransferase of Clavibacter michiganensis subsp. michiganensis (strain NCPPB 382).